The chain runs to 484 residues: Ferrochelatase-2, chloroplastic (484 aa).

It belongs to the ferrochelatase family.

The protein localises to the plastid. The protein resides in the chloroplast. It catalyses the reaction heme b + 2 H(+) = protoporphyrin IX + Fe(2+). The protein operates within porphyrin-containing compound metabolism; protoheme biosynthesis; protoheme from protoporphyrin-IX: step 1/1. In terms of biological role, catalyzes the ferrous insertion into protoporphyrin IX. In Hordeum vulgare (Barley), this protein is Ferrochelatase-2, chloroplastic (HEMH).